A 687-amino-acid polypeptide reads, in one-letter code: Protein FAR1-RELATED SEQUENCE 1 (687 aa).

In terms of domain architecture, FAR1 spans 35-137 (EFYKEYANSV…VKEHNHEIFT (103 aa)). The 44-residue stretch at 211-254 (KAMHGCRPRVILTKHDQMLKEAVLEVFPSSRHCFYMWDTLGQMP) folds into the MULE domain. Residues 440–476 (FVVVWNSESSEVVCSCRLFELKGFLCRHAMIVLQMSG) form an SWIM-type zinc finger. Residues 540 to 562 (NVLNEALRKWENKSNLIQNLEES) adopt a coiled-coil conformation.

Belongs to the FHY3/FAR1 family. Expressed in rosette and cauline leaves, inflorescences stems, flowers and siliques.

It is found in the nucleus. In terms of biological role, putative transcription activator involved in regulating light control of development. The protein is Protein FAR1-RELATED SEQUENCE 1 (FRS1) of Arabidopsis thaliana (Mouse-ear cress).